Consider the following 179-residue polypeptide: NADH dehydrogenase [ubiquinone] 1 beta subcomplex subunit 9 (179 aa).

Ala2 carries the N-acetylalanine modification. Position 85 is a phosphoserine (Ser85). Residues Glu136–Asp162 form a disordered region.

This sequence belongs to the complex I LYR family. In terms of assembly, mammalian complex I is composed of 45 different subunits.

The protein localises to the mitochondrion inner membrane. In terms of biological role, accessory subunit of the mitochondrial membrane respiratory chain NADH dehydrogenase (Complex I), that is believed to be not involved in catalysis. Complex I functions in the transfer of electrons from NADH to the respiratory chain. The immediate electron acceptor for the enzyme is believed to be ubiquinone. This Pongo abelii (Sumatran orangutan) protein is NADH dehydrogenase [ubiquinone] 1 beta subcomplex subunit 9 (NDUFB9).